The chain runs to 103 residues: Protein SUP-1 (103 aa).

The N-terminal stretch at M1 to A16 is a signal peptide. Residues A17–W75 are Extracellular-facing. The chain crosses the membrane as a helical span at residues V76 to V96. Topologically, residues R97–K103 are cytoplasmic.

Expressed in a subset of neurons and in body wall muscles. In the nervous system, expressed specifically in cholinergic motor neurons of the ventral nerve cord, a subset of cholinergic head neurons, anterior sublateral neurons, and body sublateral neurons (at protein level).

The protein localises to the cell membrane. It is found in the perikaryon. The protein resides in the cell projection. Its subcellular location is the synapse. It localises to the cytoplasmic vesicle. The protein localises to the secretory vesicle. It is found in the synaptic vesicle. Functionally, may be involved in trafficking or stabilization of the vesicular acetylcholine transporter unc-17. The protein is Protein SUP-1 of Caenorhabditis elegans.